We begin with the raw amino-acid sequence, 112 residues long: MAEDIEEIRRKKLLELQKKLAEQKRAEEEQIRQEMELEAQLQAIMKQILTSEARERLTRVKLVRPELARQVELILVQLYQAGQITERITDEKLKRILAQIDARTRKEFRIKW.

It belongs to the PDCD5 family.

This Thermococcus sibiricus (strain DSM 12597 / MM 739) protein is DNA-binding protein TSIB_0525.